The following is a 503-amino-acid chain: Ell-associated factor Eaf (503 aa).

Polar residues-rich tracts occupy residues 143-158 (PGQQ…TNVA) and 170-189 (ENST…SRRN). 2 disordered regions span residues 143 to 223 (PGQQ…PAWD) and 251 to 503 (NGSQ…EDDD). Ser-199 bears the Phosphoserine mark. Polar residues predominate over residues 251–264 (NGSQANTSGSSTGS). A compositionally biased stretch (basic residues) spans 281–296 (GKQRQAPHHGHAKRQQ). Residues 297 to 311 (RSSPPMVQQQPNFGR) show a composition bias toward polar residues. Low complexity predominate over residues 312–326 (NSYNGGNNYAQQQQH). Residues 382–397 (DSSDSDSGSDSDDSTE) show a composition bias toward acidic residues. 2 stretches are compositionally biased toward low complexity: residues 415–435 (MHHQ…QQQH) and 484–497 (NDLL…SSNS).

This sequence belongs to the EAF family.

It localises to the nucleus. Promotes transcriptional elongation by Su(Tpl)/ELL. Essential for development. The polypeptide is Ell-associated factor Eaf (Drosophila ananassae (Fruit fly)).